The chain runs to 379 residues: Succinyl-diaminopimelate desuccinylase (379 aa).

Position 70 (His70) interacts with Zn(2+). The active site involves Asp72. Residue Asp103 participates in Zn(2+) binding. Glu137 functions as the Proton acceptor in the catalytic mechanism. Glu138, Glu166, and His352 together coordinate Zn(2+).

Belongs to the peptidase M20A family. DapE subfamily. In terms of assembly, homodimer. It depends on Zn(2+) as a cofactor. Co(2+) serves as cofactor.

It carries out the reaction N-succinyl-(2S,6S)-2,6-diaminopimelate + H2O = (2S,6S)-2,6-diaminopimelate + succinate. The protein operates within amino-acid biosynthesis; L-lysine biosynthesis via DAP pathway; LL-2,6-diaminopimelate from (S)-tetrahydrodipicolinate (succinylase route): step 3/3. Catalyzes the hydrolysis of N-succinyl-L,L-diaminopimelic acid (SDAP), forming succinate and LL-2,6-diaminopimelate (DAP), an intermediate involved in the bacterial biosynthesis of lysine and meso-diaminopimelic acid, an essential component of bacterial cell walls. The sequence is that of Succinyl-diaminopimelate desuccinylase from Shewanella sp. (strain W3-18-1).